The chain runs to 460 residues: ATP synthase subunit beta (460 aa).

Gly150–Thr157 contributes to the ATP binding site.

The protein belongs to the ATPase alpha/beta chains family. In terms of assembly, F-type ATPases have 2 components, CF(1) - the catalytic core - and CF(0) - the membrane proton channel. CF(1) has five subunits: alpha(3), beta(3), gamma(1), delta(1), epsilon(1). CF(0) has three main subunits: a(1), b(2) and c(9-12). The alpha and beta chains form an alternating ring which encloses part of the gamma chain. CF(1) is attached to CF(0) by a central stalk formed by the gamma and epsilon chains, while a peripheral stalk is formed by the delta and b chains.

Its subcellular location is the cell inner membrane. It catalyses the reaction ATP + H2O + 4 H(+)(in) = ADP + phosphate + 5 H(+)(out). In terms of biological role, produces ATP from ADP in the presence of a proton gradient across the membrane. The catalytic sites are hosted primarily by the beta subunits. This chain is ATP synthase subunit beta, found in Photorhabdus laumondii subsp. laumondii (strain DSM 15139 / CIP 105565 / TT01) (Photorhabdus luminescens subsp. laumondii).